Here is a 1214-residue protein sequence, read N- to C-terminus: NBPF family member NBPF1 (1214 aa).

Positions 70–128 form a coiled coil; the sequence is MLRNERQFKEEKLAEQLKQAEELRQYKVLVHSQERELTQLREKLREGRDASRSLNQHLQ. The disordered stretch occupies residues 162-200; that stretch reads LSPENDEDEDEDVQVEEAEKVLESSAPREVQKAEESKVP. Residues 165-177 are compositionally biased toward acidic residues; sequence ENDEDEDEDVQVE. One can recognise an Olduvai 1 domain in the interval 165–259; it reads ENDEDEDEDV…ECQDAVNILP (95 aa). Basic and acidic residues predominate over residues 190–200; it reads EVQKAEESKVP. A coiled-coil region spans residues 292-399; sequence NEKLHPQLAE…ASRSLNQHLQ (108 aa). Positions 433–471 are disordered; the sequence is LSPENDEDEDEDVQVEEAEKVLESSAPREVQKAEESKVP. Residues 436–448 are compositionally biased toward acidic residues; it reads ENDEDEDEDVQVE. One can recognise an Olduvai 2 domain in the interval 436–530; it reads ENDEDEDEDV…ECQDAVNILP (95 aa). Over residues 461–471 the composition is skewed to basic and acidic residues; that stretch reads EVQKAEESKVP. Residues 610-670 are a coiled coil; the sequence is KSMLRNERQF…ASCSLNQHLQ (61 aa). Olduvai domains follow at residues 707 to 799, 800 to 888, 891 to 946, 947 to 1038, 1041 to 1114, and 1116 to 1214; these read ENDN…HIIP, ENES…ATGP, SREL…LDMD, EIEK…PPCP, SREL…RSTK, and RRRR…IFPQ. Disordered regions lie at residues 722–746 and 791–837; these read EKVQ…EDSL and WEDA…EGYS. Acidic residues-rich tracts occupy residues 801–810 and 821–833; these read NESDDEEEEE and ESEE…ESWD. The segment covering 1102–1121 has biased composition (basic residues); sequence GKGKKRRGRRSTKKRRRRGR. Residues 1102–1136 are disordered; sequence GKGKKRRGRRSTKKRRRRGRKEGEEDQNPPCPRLS.

The protein belongs to the NBPF family. As to expression, widely expressed. The only tissue which shows a weak expression is kidney.

The protein resides in the cytoplasm. This is NBPF family member NBPF1 from Homo sapiens (Human).